Here is a 93-residue protein sequence, read N- to C-terminus: Small ribosomal subunit protein uS15c (93 aa).

It belongs to the universal ribosomal protein uS15 family. Part of the 30S ribosomal subunit.

The protein resides in the plastid. It localises to the chloroplast. The sequence is that of Small ribosomal subunit protein uS15c (rps15) from Jasminum nudiflorum (Winter jasmine).